The chain runs to 503 residues: Glycerol kinase (503 aa).

An ADP-binding site is contributed by threonine 14. Residues threonine 14, threonine 15, and serine 16 each contribute to the ATP site. Position 14 (threonine 14) interacts with sn-glycerol 3-phosphate. Arginine 18 contributes to the ADP binding site. Sn-glycerol 3-phosphate contacts are provided by arginine 84, glutamate 85, tyrosine 136, and aspartate 246. Positions 84, 85, 136, 246, and 247 each coordinate glycerol. 2 residues coordinate ADP: threonine 268 and glycine 311. ATP-binding residues include threonine 268, glycine 311, glutamine 315, and glycine 412. 2 residues coordinate ADP: glycine 412 and asparagine 416.

This sequence belongs to the FGGY kinase family. In terms of assembly, homotetramer and homodimer (in equilibrium). Heterodimer with EIIA-Glc. Binds 1 zinc ion per glycerol kinase EIIA-Glc dimer. The zinc ion is important for dimerization.

It catalyses the reaction glycerol + ATP = sn-glycerol 3-phosphate + ADP + H(+). Its pathway is polyol metabolism; glycerol degradation via glycerol kinase pathway; sn-glycerol 3-phosphate from glycerol: step 1/1. With respect to regulation, activity of this regulatory enzyme is affected by several metabolites. Allosterically and non-competitively inhibited by fructose 1,6-bisphosphate (FBP) and unphosphorylated phosphocarrier protein EIIA-Glc (III-Glc), an integral component of the bacterial phosphotransferase (PTS) system. Its function is as follows. Key enzyme in the regulation of glycerol uptake and metabolism. Catalyzes the phosphorylation of glycerol to yield sn-glycerol 3-phosphate. This is Glycerol kinase from Klebsiella pneumoniae (strain 342).